Reading from the N-terminus, the 131-residue chain is Small ribosomal subunit protein uS8 (131 aa).

Belongs to the universal ribosomal protein uS8 family. As to quaternary structure, part of the 30S ribosomal subunit. Contacts proteins S5 and S12.

In terms of biological role, one of the primary rRNA binding proteins, it binds directly to 16S rRNA central domain where it helps coordinate assembly of the platform of the 30S subunit. The protein is Small ribosomal subunit protein uS8 of Mycoplasmopsis agalactiae (strain NCTC 10123 / CIP 59.7 / PG2) (Mycoplasma agalactiae).